The sequence spans 481 residues: UDP-N-acetylmuramate--L-alanine ligase (481 aa).

126-132 (GTHGKTT) contributes to the ATP binding site.

This sequence belongs to the MurCDEF family.

The protein resides in the cytoplasm. The catalysed reaction is UDP-N-acetyl-alpha-D-muramate + L-alanine + ATP = UDP-N-acetyl-alpha-D-muramoyl-L-alanine + ADP + phosphate + H(+). It participates in cell wall biogenesis; peptidoglycan biosynthesis. Cell wall formation. The chain is UDP-N-acetylmuramate--L-alanine ligase from Marinobacter nauticus (strain ATCC 700491 / DSM 11845 / VT8) (Marinobacter aquaeolei).